We begin with the raw amino-acid sequence, 112 residues long: SRA stem-loop-interacting RNA-binding protein, mitochondrial (112 aa).

S15 is modified (phosphoserine). In terms of domain architecture, RRM spans 19–98 (PIAFVRKIPW…IHVQAQRAKA (80 aa)). T104 carries the phosphothreonine modification. Phosphoserine is present on S105.

It is found in the mitochondrion. It localises to the nucleus. In terms of biological role, RNA-binding protein that acts as a nuclear receptor corepressor. Probably acts by binding the SRA RNA, and repressing the SRA-mediated nuclear receptor coactivation. Binds the STR7 loop of SRA RNA. Also able to repress glucocorticoid (GR), androgen (AR), thyroid (TR) and VDR-mediated transactivation. The polypeptide is SRA stem-loop-interacting RNA-binding protein, mitochondrial (Slirp) (Mus musculus (Mouse)).